Reading from the N-terminus, the 593-residue chain is AT-rich interactive domain-containing protein 3A (593 aa).

Residues 14-222 (QQRARQELEA…PQLQPPDHGD (209 aa)) are disordered. Basic and acidic residues predominate over residues 41-53 (AAPDEDREPESAR). Residues 54–87 (MQRAQMAALAAMRAAAAGLGHPASPGGSEDGPPG) are compositionally biased toward low complexity. A phosphoserine mark is found at Ser-77, Ser-81, and Ser-88. Thr-98 carries the post-translational modification Phosphothreonine. Residues Ser-101 and Ser-119 each carry the phosphoserine modification. Residues 104–127 (RGREGPGEEHFEDMASDEDMKPKW) are compositionally biased toward basic and acidic residues. The tract at residues 119–156 (SDEDMKPKWEEEEMEEDLGEDEEEEEEDYEDEEEEEDE) is acidic. Over residues 128-158 (EEEEMEEDLGEDEEEEEEDYEDEEEEEDEEG) the composition is skewed to acidic residues. The ARID domain maps to 238-330 (DPKRKEFLDD…YLYPYECEKR (93 aa)). A phosphoserine mark is found at Ser-353 and Ser-362. Residues Lys-398, Lys-399, Lys-452, and Lys-462 each participate in a glycyl lysine isopeptide (Lys-Gly) (interchain with G-Cter in SUMO2) cross-link. The 98-residue stretch at 444–541 (AALEQLREKL…GVLFAQPPAP (98 aa)) folds into the REKLES domain. Residues 445 to 488 (ALEQLREKLESAEPPEKKMALVADEQQRLMQRALQQNFLAMAAQ) form an important for nuclear localization region. The tract at residues 490-513 (PMSIRINSQASESRQDSAVNLTGT) is homodimerization. 2 disordered regions span residues 497-516 (SQAS…TNGS) and 539-593 (PAPT…NSLP). Residues 537–557 (QPPAPTPTSAPNKGGGGGGGS) form an important for cytoplasmic localization region. Residues 549–576 (KGGGGGGGSSSNAGGRGGNTGTSGGQAG) are compositionally biased toward gly residues. Low complexity predominate over residues 580 to 593 (LSTPSTSTSNNSLP).

In terms of assembly, homodimer. Heterodimer with ARID3B. Interacts with E2F1. Interacts with GTF2I and BTK. As to expression, widely expressed, with highest expression in skeletal muscle, thalamus, and colon.

It is found in the nucleus. The protein localises to the cytoplasm. In terms of biological role, transcription factor which may be involved in the control of cell cycle progression by the RB1/E2F1 pathway and in B-cell differentiation. This is AT-rich interactive domain-containing protein 3A (ARID3A) from Homo sapiens (Human).